We begin with the raw amino-acid sequence, 130 residues long: MAKVQYMGTGRRKKSVARVRLVPGNGKVVINKREIETFFGLETLRVIVNQPLVLTGTKDKFDVLVNVHGGGFTGQAGAIRHGITRALVKSDETLRPELKKAGFLTRDPRMKERKKYGLKKARRAPQFSKR.

The segment covering 99 to 110 (KKAGFLTRDPRM) has biased composition (basic and acidic residues). Positions 99 to 130 (KKAGFLTRDPRMKERKKYGLKKARRAPQFSKR) are disordered. A compositionally biased stretch (basic residues) spans 111–130 (KERKKYGLKKARRAPQFSKR).

This sequence belongs to the universal ribosomal protein uS9 family.

The sequence is that of Small ribosomal subunit protein uS9 from Clostridium botulinum (strain Eklund 17B / Type B).